Here is a 451-residue protein sequence, read N- to C-terminus: uncharacterized protein (451 aa).

It to ORF5 in pFZ1.

This is an uncharacterized protein from Methanothermobacter thermautotrophicus (Methanobacterium thermoformicicum).